The primary structure comprises 179 residues: Shikimate kinase (179 aa).

Residue 14–19 (GAGKTT) participates in ATP binding. Mg(2+) is bound at residue Thr-18. Substrate contacts are provided by Asp-36, Arg-60, and Gly-82. Arg-120 serves as a coordination point for ATP. Arg-139 lines the substrate pocket.

Belongs to the shikimate kinase family. Monomer. It depends on Mg(2+) as a cofactor.

The protein resides in the cytoplasm. The catalysed reaction is shikimate + ATP = 3-phosphoshikimate + ADP + H(+). The protein operates within metabolic intermediate biosynthesis; chorismate biosynthesis; chorismate from D-erythrose 4-phosphate and phosphoenolpyruvate: step 5/7. Catalyzes the specific phosphorylation of the 3-hydroxyl group of shikimic acid using ATP as a cosubstrate. The protein is Shikimate kinase of Methylococcus capsulatus (strain ATCC 33009 / NCIMB 11132 / Bath).